The sequence spans 231 residues: Claudin-10 (231 aa).

A helical membrane pass occupies residues 1–21; the sequence is MASTASEIIAFMVSISGWVLV. Residues 22-80 lie on the Extracellular side of the membrane; the sequence is SSTLPTDYWKVSTIDGTVITTATYWANLWKTCVTDSTGVSNCKDFPSMLALDGYIQACR. Residues 81 to 101 form a helical membrane-spanning segment; the sequence is GLMIAAVSLGFFGSIFALIGM. At 102–115 the chain is on the cytoplasmic side; that stretch reads KCTKVGGSDKAKAK. A helical membrane pass occupies residues 116-136; sequence IACLAGIVFILSGLCSMTGCS. Residues 137–160 lie on the Extracellular side of the membrane; the sequence is LYANKITTEFFDPLFVEQKYELGA. A helical transmembrane segment spans residues 161–181; the sequence is ALFIGWAGASLCLIGGVIFCF. At 182-231 the chain is on the cytoplasmic side; it reads SISDNNKAPRMGYTYNGATSVMSSRTKYHGREGDLKTPNPSKQFDKNAYV.

It belongs to the claudin family. As to quaternary structure, can form homodimers both in trans (interaction between CLDN10 molecules in opposing membranes) and in cis (interaction between CLDN10 molecules within one membrane). Interacts with CLDN19.

The protein resides in the cell junction. It is found in the tight junction. The protein localises to the cell membrane. It catalyses the reaction Na(+)(in) = Na(+)(out). The catalysed reaction is Li(+)(in) = Li(+)(out). The enzyme catalyses K(+)(in) = K(+)(out). It carries out the reaction Rb(+)(in) = Rb(+)(out). It catalyses the reaction Cs(+)(in) = Cs(+)(out). The catalysed reaction is NH4(+)(in) = NH4(+)(out). The enzyme catalyses methylamine(out) = methylamine(in). It carries out the reaction Mg(2+)(in) = Mg(2+)(out). It catalyses the reaction Ca(2+)(in) = Ca(2+)(out). The catalysed reaction is Sr(2+)(in) = Sr(2+)(out). The enzyme catalyses chloride(in) = chloride(out). It carries out the reaction nitrate(in) = nitrate(out). Its function is as follows. Forms paracellular channels: polymerizes in tight junction strands with cation- and anion-selective channels through the strands, conveying epithelial permeability in a process known as paracellular tight junction permeability. In sweat glands and in the thick ascending limb (TAL) of Henle's loop in kidney, it controls paracellular sodium permeability which is essential for proper sweat production and renal function. In renal proximal tubules, it conveys selective chloride over hydrogencarbonate anion permeability which is required for renal chloride reabsorption and salt homeostasis. In Bos taurus (Bovine), this protein is Claudin-10 (CLDN10).